The following is a 297-amino-acid chain: Homoserine kinase (297 aa).

82 to 92 (PLTRGLGSSAS) contacts ATP.

Belongs to the GHMP kinase family. Homoserine kinase subfamily.

The protein localises to the cytoplasm. It carries out the reaction L-homoserine + ATP = O-phospho-L-homoserine + ADP + H(+). It participates in amino-acid biosynthesis; L-threonine biosynthesis; L-threonine from L-aspartate: step 4/5. Its function is as follows. Catalyzes the ATP-dependent phosphorylation of L-homoserine to L-homoserine phosphate. The sequence is that of Homoserine kinase from Bacillus thuringiensis (strain Al Hakam).